Reading from the N-terminus, the 88-residue chain is Small ribosomal subunit protein uS15 (88 aa).

The span at 1–12 (MITQEEQQKIID) shows a compositional bias: basic and acidic residues. The disordered stretch occupies residues 1–24 (MITQEEQQKIIDRFGNGPNDTGTP).

The protein belongs to the universal ribosomal protein uS15 family. In terms of assembly, part of the 30S ribosomal subunit. Forms a bridge to the 50S subunit in the 70S ribosome, contacting the 23S rRNA.

One of the primary rRNA binding proteins, it binds directly to 16S rRNA where it helps nucleate assembly of the platform of the 30S subunit by binding and bridging several RNA helices of the 16S rRNA. Functionally, forms an intersubunit bridge (bridge B4) with the 23S rRNA of the 50S subunit in the ribosome. This Salinibacter ruber (strain DSM 13855 / M31) protein is Small ribosomal subunit protein uS15.